The primary structure comprises 484 residues: tRNA sulfurtransferase (484 aa).

The region spanning 63–167 is the THUMP domain; that stretch reads ELFAERLAHI…RDKLYMVSQR (105 aa). ATP-binding positions include 185-186, lysine 267, glycine 289, and glutamine 298; that span reads LI. A disulfide bond links cysteine 346 and cysteine 458. Residues 406-484 enclose the Rhodanese domain; it reads AAGNEVIIDI…GYNNVKVYRP (79 aa). The active-site Cysteine persulfide intermediate is the cysteine 458.

This sequence belongs to the ThiI family.

The protein resides in the cytoplasm. It carries out the reaction [ThiI sulfur-carrier protein]-S-sulfanyl-L-cysteine + a uridine in tRNA + 2 reduced [2Fe-2S]-[ferredoxin] + ATP + H(+) = [ThiI sulfur-carrier protein]-L-cysteine + a 4-thiouridine in tRNA + 2 oxidized [2Fe-2S]-[ferredoxin] + AMP + diphosphate. The catalysed reaction is [ThiS sulfur-carrier protein]-C-terminal Gly-Gly-AMP + S-sulfanyl-L-cysteinyl-[cysteine desulfurase] + AH2 = [ThiS sulfur-carrier protein]-C-terminal-Gly-aminoethanethioate + L-cysteinyl-[cysteine desulfurase] + A + AMP + 2 H(+). Its pathway is cofactor biosynthesis; thiamine diphosphate biosynthesis. Its function is as follows. Catalyzes the ATP-dependent transfer of a sulfur to tRNA to produce 4-thiouridine in position 8 of tRNAs, which functions as a near-UV photosensor. Also catalyzes the transfer of sulfur to the sulfur carrier protein ThiS, forming ThiS-thiocarboxylate. This is a step in the synthesis of thiazole, in the thiamine biosynthesis pathway. The sulfur is donated as persulfide by IscS. The sequence is that of tRNA sulfurtransferase from Shewanella amazonensis (strain ATCC BAA-1098 / SB2B).